The following is an 82-amino-acid chain: Large ribosomal subunit protein bL31B (82 aa).

Belongs to the bacterial ribosomal protein bL31 family. Type B subfamily. Part of the 50S ribosomal subunit.

This is Large ribosomal subunit protein bL31B from Pectobacterium carotovorum subsp. carotovorum (strain PC1).